Reading from the N-terminus, the 185-residue chain is Ribosome-recycling factor (185 aa).

This sequence belongs to the RRF family.

It is found in the cytoplasm. Functionally, responsible for the release of ribosomes from messenger RNA at the termination of protein biosynthesis. May increase the efficiency of translation by recycling ribosomes from one round of translation to another. The chain is Ribosome-recycling factor from Desulfosudis oleivorans (strain DSM 6200 / JCM 39069 / Hxd3) (Desulfococcus oleovorans).